We begin with the raw amino-acid sequence, 246 residues long: 5-oxoprolinase subunit A (246 aa).

This sequence belongs to the LamB/PxpA family. In terms of assembly, forms a complex composed of PxpA, PxpB and PxpC.

The catalysed reaction is 5-oxo-L-proline + ATP + 2 H2O = L-glutamate + ADP + phosphate + H(+). In terms of biological role, catalyzes the cleavage of 5-oxoproline to form L-glutamate coupled to the hydrolysis of ATP to ADP and inorganic phosphate. The protein is 5-oxoprolinase subunit A of Vibrio cholerae serotype O1 (strain M66-2).